Here is a 526-residue protein sequence, read N- to C-terminus: ATP synthase subunit alpha (526 aa).

171–178 (GDRQVGKT) provides a ligand contact to ATP.

This sequence belongs to the ATPase alpha/beta chains family. As to quaternary structure, F-type ATPases have 2 components, CF(1) - the catalytic core - and CF(0) - the membrane proton channel. CF(1) has five subunits: alpha(3), beta(3), gamma(1), delta(1), epsilon(1). CF(0) has three main subunits: a(1), b(2) and c(9-12). The alpha and beta chains form an alternating ring which encloses part of the gamma chain. CF(1) is attached to CF(0) by a central stalk formed by the gamma and epsilon chains, while a peripheral stalk is formed by the delta and b chains.

It localises to the cell inner membrane. The catalysed reaction is ATP + H2O + 4 H(+)(in) = ADP + phosphate + 5 H(+)(out). In terms of biological role, produces ATP from ADP in the presence of a proton gradient across the membrane. The alpha chain is a regulatory subunit. This chain is ATP synthase subunit alpha, found in Azobacteroides pseudotrichonymphae genomovar. CFP2.